A 901-amino-acid polypeptide reads, in one-letter code: HTH-type transcriptional regulator MalT (901 aa).

39 to 46 provides a ligand contact to ATP; that stretch reads SPAGYGKT. In terms of domain architecture, HTH luxR-type spans 829-894; the sequence is ELIRTSPLTQ…AAVQHAQKLL (66 aa). The H-T-H motif DNA-binding region spans 853–872; that stretch reads NEQIAGELEVAATTIKTHIR.

It belongs to the MalT family. In terms of assembly, monomer in solution. Oligomerizes to an active state in the presence of the positive effectors ATP and maltotriose.

With respect to regulation, activated by ATP and maltotriose, which are both required for DNA binding. In terms of biological role, positively regulates the transcription of the maltose regulon whose gene products are responsible for uptake and catabolism of malto-oligosaccharides. Specifically binds to the promoter region of its target genes, recognizing a short DNA motif called the MalT box. This Escherichia coli O139:H28 (strain E24377A / ETEC) protein is HTH-type transcriptional regulator MalT.